A 364-amino-acid chain; its full sequence is tRNA-specific 2-thiouridylase MnmA 2 (364 aa).

ATP-binding positions include glycine 10–serine 17 and methionine 36. Residue cysteine 106 is the Nucleophile of the active site. Residues cysteine 106 and cysteine 204 are joined by a disulfide bond. Glycine 130 provides a ligand contact to ATP. Residues lysine 154–glutamine 156 are interaction with tRNA. The active-site Cysteine persulfide intermediate is the cysteine 204. An interaction with tRNA region spans residues arginine 310 to tyrosine 311.

This sequence belongs to the MnmA/TRMU family.

It is found in the cytoplasm. It catalyses the reaction S-sulfanyl-L-cysteinyl-[protein] + uridine(34) in tRNA + AH2 + ATP = 2-thiouridine(34) in tRNA + L-cysteinyl-[protein] + A + AMP + diphosphate + H(+). In terms of biological role, catalyzes the 2-thiolation of uridine at the wobble position (U34) of tRNA, leading to the formation of s(2)U34. The chain is tRNA-specific 2-thiouridylase MnmA 2 from Thermoanaerobacter pseudethanolicus (strain ATCC 33223 / 39E) (Clostridium thermohydrosulfuricum).